The following is a 470-amino-acid chain: MNMTGGGAGPQAGPNSSCNIPNSSLLATAPVAATMPIAQLADGWLELESDPGLFTLLLEDFGCHDVQVEEVYDLQKPIESPYGFIFLFRWIEERRARRKIVETTAEIFVKDEEAISSIFFAQQVVPNSCATHALLSVLLNCNENNLQLGDTLSRLKAHTKGMSPENKGLAIGNTPELACAHNSHAMPQARRRLERTGAGVSSCRFTGEAFHFVSFVPINGQLFELDGLKPYPMNHGGWEDHEDWTDKFRRVMTERLGIATGEQDIRFNLMAVVPDRRIAITHKLKMLRTNQAIVSGTLQKLLKADEQGEGGNGDPQRPDTPSTLLEPSAFTARDLQSLLKNLDTEIAINEQHLADENDRRHKFKVDASRRTHNYDKFICTFLSMLAHQGVLGELVSQHLLPSKKISGQSAANRLNKQSNATANAGATAAGAAGAAPKSQQQQAAAAKNGKSPSKTPGRRRKGRNKCKKRK.

Residues 43–274 form the UCH catalytic domain; sequence GWLELESDPG…IRFNLMAVVP (232 aa). Cys129 (nucleophile) is an active-site residue. Catalysis depends on His211, which acts as the Proton donor. Positions 305-324 are disordered; that stretch reads DEQGEGGNGDPQRPDTPSTL. In terms of domain architecture, ULD spans 373-401; the sequence is NYDKFICTFLSMLAHQGVLGELVSQHLLP. The interval 403–470 is positively charged C-terminal tail required for binding nucleosomes; that stretch reads KKISGQSAAN…KGRNKCKKRK (68 aa). Residues 422–451 are compositionally biased toward low complexity; that stretch reads ANAGATAAGAAGAAPKSQQQQAAAAKNGKS. The tract at residues 422-470 is disordered; that stretch reads ANAGATAAGAAGAAPKSQQQQAAAAKNGKSPSKTPGRRRKGRNKCKKRK. A compositionally biased stretch (basic residues) spans 456–470; the sequence is PGRRRKGRNKCKKRK.

It belongs to the peptidase C12 family. BAP1 subfamily. Catalytic component of the polycomb repressive deubiquitinase (PR-DUB) complex, at least composed of caly/calypso, Asx and sba (MBD5/6 homolog). The PR-DUB complex associates with nucleosomes to mediate deubiquitination of histone H2AK118ub1 substrates; the association requires the positively charged C-terminal tail of caly, probably due to direct binding of DNA. Interacts (via ULD domain) with Asx (via DEUBAD domain); the interaction produces a stable heterodimer with a composite binding site for ubiquitin. Homodimerizes (via coiled-coil hinge-region between the UCH and ULD domains) to mediate assembly of 2 copies of the caly-Asx heterodimer into a bisymmetric tetramer; dimerization enhances PR-DUB association with nucleosomes.

The protein localises to the nucleus. The catalysed reaction is Thiol-dependent hydrolysis of ester, thioester, amide, peptide and isopeptide bonds formed by the C-terminal Gly of ubiquitin (a 76-residue protein attached to proteins as an intracellular targeting signal).. In terms of biological role, catalytic component of the polycomb repressive deubiquitinase (PR-DUB) complex, a complex that specifically mediates deubiquitination of histone H2A monoubiquitinated at 'Lys-119' (H2AK118ub1). Mediates bisymmetric organization of the PR-DUB complex and is involved in association with nucleosomes to mediate deubiquitination. Does not deubiquitinate monoubiquitinated histone H2B. Required to maintain the transcriptionally repressive state of homeotic genes throughout development. The PR-DUB complex has weak or no activity toward 'Lys-48'- and 'Lys-63'-linked polyubiquitin chains. Polycomb group (PcG) protein. The chain is Ubiquitin carboxyl-terminal hydrolase calypso from Drosophila ananassae (Fruit fly).